The sequence spans 261 residues: Caveolae-associated protein 3 (261 aa).

Residues 1–84 are interaction with CAVIN1; it reads MRESALERGP…SNTLAQLLAK (84 aa). The tract at residues 20–78 is leucine-zipper; that stretch reads VHAVTVVTLLEKLASMLETLRERQGGLARRQGGLAGSVRRIQSGLGALSRSHDTTSNTL. Residues S62 and S70 each carry the phosphoserine modification. K128 is covalently cross-linked (Glycyl lysine isopeptide (Lys-Gly) (interchain with G-Cter in SUMO2)). The segment at 135–203 is interaction with CAV1; that stretch reads ASAFQKAPEP…SGRKGPAAPP (69 aa). Residues 139–261 are disordered; sequence QKAPEPLGPA…EALLQMESVA (123 aa). Acidic residues predominate over residues 158-170; the sequence is LEAEVGESSDEEP. Phosphoserine occurs at positions 165, 166, and 173. Positions 200–212 are enriched in pro residues; sequence AAPPPTPVKPPRL. Residues 213–231 show a composition bias toward low complexity; sequence GPGRSAEAQPEAQPALEPT.

It belongs to the CAVIN family. In terms of assembly, component of the CAVIN complex composed of CAVIN1, CAVIN2, CAVIN3 and CAVIN4. Interacts with PRKCD and with phosphatidylserine. Phosphatidylserine may form a bridge between PKC and PKC-binding partners and stabilize the binding. Interacts with PER2. Interacts with CAVIN1. Interacts (via leucine-zipper domain) with CAV1 in a cholesterol-sensitive manner. Interacts with EPS15L1. In vitro, phosphorylated by PRKCD. In terms of tissue distribution, skeletal muscle, liver, stomach, lung, kidney and heart (at protein level). Strongly expressed in mammary and epithelial cells.

It localises to the cytoplasm. The protein resides in the membrane. It is found in the caveola. The protein localises to the cytosol. Functionally, regulates the traffic and/or budding of caveolae. Plays a role in caveola formation in a tissue-specific manner. Required for the formation of caveolae in smooth muscle but not in the lung and heart endothelial cells. Regulates the equilibrium between cell surface-associated and cell surface-dissociated caveolae by promoting the rapid release of caveolae from the cell surface. Plays a role in the regulation of the circadian clock. Modulates the period length and phase of circadian gene expression and also regulates expression and interaction of the core clock components PER1/2 and CRY1/2. The chain is Caveolae-associated protein 3 from Homo sapiens (Human).